The following is a 597-amino-acid chain: Probable potassium transport system protein Kup 1 (597 aa).

10 consecutive transmembrane segments (helical) span residues 23-43, 72-92, 98-118, 143-163, 174-194, 226-246, 273-293, 303-323, 329-349, and 353-373; these read GAWL…DSVL, LTMM…SRGT, VFGS…VVAI, ATGL…EALY, IYFT…GQGA, AVVL…TGAF, LYIP…LLLF, YGLA…IYLW, FGAV…FAAS, and FLHG…IMYT.

The protein belongs to the HAK/KUP transporter (TC 2.A.72) family.

It is found in the cell membrane. It catalyses the reaction K(+)(in) + H(+)(in) = K(+)(out) + H(+)(out). In terms of biological role, transport of potassium into the cell. Likely operates as a K(+):H(+) symporter. The protein is Probable potassium transport system protein Kup 1 (kup1) of Bifidobacterium longum (strain NCC 2705).